Consider the following 209-residue polypeptide: Large ribosomal subunit protein uL3 (209 aa).

It belongs to the universal ribosomal protein uL3 family. In terms of assembly, part of the 50S ribosomal subunit. Forms a cluster with proteins L14 and L19.

Its function is as follows. One of the primary rRNA binding proteins, it binds directly near the 3'-end of the 23S rRNA, where it nucleates assembly of the 50S subunit. This is Large ribosomal subunit protein uL3 from Oceanobacillus iheyensis (strain DSM 14371 / CIP 107618 / JCM 11309 / KCTC 3954 / HTE831).